A 106-amino-acid polypeptide reads, in one-letter code: UPF0145 protein Athe_0545 (106 aa).

This sequence belongs to the UPF0145 family.

The protein is UPF0145 protein Athe_0545 of Caldicellulosiruptor bescii (strain ATCC BAA-1888 / DSM 6725 / KCTC 15123 / Z-1320) (Anaerocellum thermophilum).